Consider the following 302-residue polypeptide: N-acetyl-D-glucosamine kinase (302 aa).

Residues 4–11 (GFDVGGTK) and 133–140 (GFGGGLVF) contribute to the ATP site. Zn(2+) is bound by residues His-157, Cys-177, Cys-179, and Cys-184.

It belongs to the ROK (NagC/XylR) family. NagK subfamily.

The enzyme catalyses N-acetyl-D-glucosamine + ATP = N-acetyl-D-glucosamine 6-phosphate + ADP + H(+). Its pathway is cell wall biogenesis; peptidoglycan recycling. In terms of biological role, catalyzes the phosphorylation of N-acetyl-D-glucosamine (GlcNAc) derived from cell-wall degradation, yielding GlcNAc-6-P. This Aliivibrio salmonicida (strain LFI1238) (Vibrio salmonicida (strain LFI1238)) protein is N-acetyl-D-glucosamine kinase.